Consider the following 121-residue polypeptide: Large ribosomal subunit protein bL12 (121 aa).

This sequence belongs to the bacterial ribosomal protein bL12 family. Homodimer. Part of the ribosomal stalk of the 50S ribosomal subunit. Forms a multimeric L10(L12)X complex, where L10 forms an elongated spine to which 2 to 4 L12 dimers bind in a sequential fashion. Binds GTP-bound translation factors.

Its function is as follows. Forms part of the ribosomal stalk which helps the ribosome interact with GTP-bound translation factors. Is thus essential for accurate translation. The chain is Large ribosomal subunit protein bL12 from Lachnospira eligens (strain ATCC 27750 / DSM 3376 / VPI C15-48 / C15-B4) (Eubacterium eligens).